Consider the following 497-residue polypeptide: Phenylalanine--tRNA ligase alpha subunit (497 aa).

L-phenylalanine contacts are provided by residues Thr-329, Gln-372 to Glu-374, and Tyr-412. Glu-414 serves as a coordination point for Mg(2+). Phe-438 is a binding site for L-phenylalanine.

Belongs to the class-II aminoacyl-tRNA synthetase family. Phe-tRNA synthetase alpha subunit type 2 subfamily. As to quaternary structure, heterotetramer; dimer of two heterodimers formed by alpha and beta subunits. The cofactor is Mg(2+).

Its subcellular location is the cytoplasm. The catalysed reaction is tRNA(Phe) + L-phenylalanine + ATP = L-phenylalanyl-tRNA(Phe) + AMP + diphosphate + H(+). The polypeptide is Phenylalanine--tRNA ligase alpha subunit (farsa) (Danio rerio (Zebrafish)).